The following is a 234-amino-acid chain: Glucosamine-6-phosphate deaminase (234 aa).

The active-site Proton acceptor; for enolization step is the D63. Residue N129 is the For ring-opening step of the active site. The active-site Proton acceptor; for ring-opening step is H131. The For ring-opening step role is filled by E136.

Belongs to the glucosamine/galactosamine-6-phosphate isomerase family. NagB subfamily.

It carries out the reaction alpha-D-glucosamine 6-phosphate + H2O = beta-D-fructose 6-phosphate + NH4(+). The protein operates within amino-sugar metabolism; N-acetylneuraminate degradation; D-fructose 6-phosphate from N-acetylneuraminate: step 5/5. In terms of biological role, catalyzes the reversible isomerization-deamination of glucosamine 6-phosphate (GlcN6P) to form fructose 6-phosphate (Fru6P) and ammonium ion. In Listeria innocua serovar 6a (strain ATCC BAA-680 / CLIP 11262), this protein is Glucosamine-6-phosphate deaminase.